The chain runs to 530 residues: Bifunctional purine biosynthesis protein PurH (530 aa).

The MGS-like domain maps to 1–148; the sequence is MNNARPIHRA…KNHKDVAIVV (148 aa).

It belongs to the PurH family.

It catalyses the reaction (6R)-10-formyltetrahydrofolate + 5-amino-1-(5-phospho-beta-D-ribosyl)imidazole-4-carboxamide = 5-formamido-1-(5-phospho-D-ribosyl)imidazole-4-carboxamide + (6S)-5,6,7,8-tetrahydrofolate. The enzyme catalyses IMP + H2O = 5-formamido-1-(5-phospho-D-ribosyl)imidazole-4-carboxamide. It functions in the pathway purine metabolism; IMP biosynthesis via de novo pathway; 5-formamido-1-(5-phospho-D-ribosyl)imidazole-4-carboxamide from 5-amino-1-(5-phospho-D-ribosyl)imidazole-4-carboxamide (10-formyl THF route): step 1/1. Its pathway is purine metabolism; IMP biosynthesis via de novo pathway; IMP from 5-formamido-1-(5-phospho-D-ribosyl)imidazole-4-carboxamide: step 1/1. This chain is Bifunctional purine biosynthesis protein PurH, found in Vibrio cholerae serotype O1 (strain M66-2).